The following is a 60-amino-acid chain: Metallothionein (60 aa).

Residues 1–28 are beta; the sequence is MDPCECSKGGTCNCGGSCTCTNCSCTTC. 20 residues coordinate a divalent metal cation: Cys4, Cys6, Cys12, Cys14, Cys18, Cys20, Cys23, Cys25, Cys28, Cys32, Cys33, Cys35, Cys36, Cys40, Cys43, Cys47, Cys49, Cys54, Cys58, and Cys59. The segment at 29–60 is alpha; the sequence is KKSCCPCCPSGCPKCASGCVCKGKTCDAACCQ.

The protein belongs to the metallothionein superfamily. Type 1 family.

Metallothioneins have a high content of cysteine residues that bind various heavy metals. This Perca fluviatilis (European perch) protein is Metallothionein (mt).